Here is a 284-residue protein sequence, read N- to C-terminus: 2-dehydro-3-deoxyphosphooctonate aldolase (284 aa).

This sequence belongs to the KdsA family.

It is found in the cytoplasm. The catalysed reaction is D-arabinose 5-phosphate + phosphoenolpyruvate + H2O = 3-deoxy-alpha-D-manno-2-octulosonate-8-phosphate + phosphate. The protein operates within carbohydrate biosynthesis; 3-deoxy-D-manno-octulosonate biosynthesis; 3-deoxy-D-manno-octulosonate from D-ribulose 5-phosphate: step 2/3. It functions in the pathway bacterial outer membrane biogenesis; lipopolysaccharide biosynthesis. The polypeptide is 2-dehydro-3-deoxyphosphooctonate aldolase (Histophilus somni (strain 129Pt) (Haemophilus somnus)).